The primary structure comprises 169 residues: Lipoprotein signal peptidase (169 aa).

Helical transmembrane passes span 56–76 (FLPP…VIIY) and 84–104 (QPLF…NLID). Catalysis depends on residues D113 and D139. The chain crosses the membrane as a helical span at residues 132-152 (WPIFNIADSAITIGACMLIIF).

Belongs to the peptidase A8 family.

It localises to the cell inner membrane. It catalyses the reaction Release of signal peptides from bacterial membrane prolipoproteins. Hydrolyzes -Xaa-Yaa-Zaa-|-(S,diacylglyceryl)Cys-, in which Xaa is hydrophobic (preferably Leu), and Yaa (Ala or Ser) and Zaa (Gly or Ala) have small, neutral side chains.. It functions in the pathway protein modification; lipoprotein biosynthesis (signal peptide cleavage). In terms of biological role, this protein specifically catalyzes the removal of signal peptides from prolipoproteins. The protein is Lipoprotein signal peptidase of Chlorobium phaeovibrioides (strain DSM 265 / 1930) (Prosthecochloris vibrioformis (strain DSM 265)).